Reading from the N-terminus, the 161-residue chain is Beta-lactoglobulin-2 (161 aa).

Intrachain disulfides connect cysteine 66–cysteine 159 and cysteine 106–cysteine 119.

Belongs to the calycin superfamily. Lipocalin family. As to quaternary structure, monomer. In terms of tissue distribution, synthesized in mammary gland and secreted in milk.

It is found in the secreted. Primary component of whey, it binds retinol and is probably involved in the transport of that molecule. This is Beta-lactoglobulin-2 (LGB2) from Canis lupus familiaris (Dog).